The primary structure comprises 62 residues: Potassium channel toxin gamma-KTx 1.1 (62 aa).

The N-terminal stretch at 1–20 (MKVLILIMIIASLMIMGVEM) is a signal peptide. 4 cysteine pairs are disulfide-bonded: Cys-25/Cys-43, Cys-31/Cys-54, Cys-40/Cys-59, and Cys-44/Cys-61.

Belongs to the ergtoxin family. Gamma-KTx 1 subfamily. After protein storage at -20 Celsius degrees during a couple of months, the Met-55 of a small number of toxins is naturally oxidized. This oxidized form is about three orders of magnitude less efficient (IC(50)=15 uM) than non-oxidized form. Expressed by the venom gland.

The protein resides in the secreted. Its function is as follows. Blocks human and rat Kv11.1/KCNH2/ERG1 and Kv11.3/KCNH7/ERG3, as well as rat (but not human) Kv11.2/KCNH6/ERG2 by binding to channel outer vestibule (S5P domain) with a 1:1 stoichiometry. Inhibition data are the following: hERG1 (reversible, IC(50)~7 nM), rERG1 (reversible, Kd=6.8 nM), rERG2 (irreversible, Kd=2.8 nM), hERG3 (irreversible, Kd=4.05 nM) and rERG3 (reversible, Kd=38.1 nM) potassium channels. The toxin potency is not affected by elevating potassium ion concentration from 2 to 98 mM. This toxin only blocks channels in a closed state. At high toxin concentrations, block of Kv11.1/KCNH2/ERG1 macroscopic current is incomplete (93.5%). This suggests a kinetic mechanism model with two different states of toxin-channel binding (T+C=TC*=TC; in the TC* state, the toxin binds the channel but does not occlude the pore, whereas in the TC state the toxin binds and occludes the pore). In this model, incomplete block is explained by the relatively fast dissociation rate from the blocked channel conformation (TC) relative to the rate of conversion of the toxin-channel encounter complex (TC*) to the blocked channel conformation (TC). The sequence is that of Potassium channel toxin gamma-KTx 1.1 from Centruroides noxius (Mexican scorpion).